A 204-amino-acid chain; its full sequence is dITP/XTP pyrophosphatase (204 aa).

Position 8–13 (8–13) interacts with substrate; it reads SNNAHK. 2 residues coordinate Mg(2+): Glu-41 and Asp-76. The Proton acceptor role is filled by Asp-76. Substrate contacts are provided by residues Ser-77, 159–162, Lys-182, and 187–188; these read FGYD and HR.

Belongs to the HAM1 NTPase family. Homodimer. The cofactor is Mg(2+).

It catalyses the reaction XTP + H2O = XMP + diphosphate + H(+). It carries out the reaction dITP + H2O = dIMP + diphosphate + H(+). The catalysed reaction is ITP + H2O = IMP + diphosphate + H(+). Its function is as follows. Pyrophosphatase that catalyzes the hydrolysis of nucleoside triphosphates to their monophosphate derivatives, with a high preference for the non-canonical purine nucleotides XTP (xanthosine triphosphate), dITP (deoxyinosine triphosphate) and ITP. Seems to function as a house-cleaning enzyme that removes non-canonical purine nucleotides from the nucleotide pool, thus preventing their incorporation into DNA/RNA and avoiding chromosomal lesions. The chain is dITP/XTP pyrophosphatase from Clostridium perfringens (strain 13 / Type A).